We begin with the raw amino-acid sequence, 357 residues long: UDP-N-acetylglucosamine--N-acetylmuramyl-(pentapeptide) pyrophosphoryl-undecaprenol N-acetylglucosamine transferase (357 aa).

Residues 13–15, Asn125, Arg161, Ser189, Ile243, and Gln288 each bind UDP-N-acetyl-alpha-D-glucosamine; that span reads TGG.

The protein belongs to the glycosyltransferase 28 family. MurG subfamily.

It localises to the cell inner membrane. The catalysed reaction is di-trans,octa-cis-undecaprenyl diphospho-N-acetyl-alpha-D-muramoyl-L-alanyl-D-glutamyl-meso-2,6-diaminopimeloyl-D-alanyl-D-alanine + UDP-N-acetyl-alpha-D-glucosamine = di-trans,octa-cis-undecaprenyl diphospho-[N-acetyl-alpha-D-glucosaminyl-(1-&gt;4)]-N-acetyl-alpha-D-muramoyl-L-alanyl-D-glutamyl-meso-2,6-diaminopimeloyl-D-alanyl-D-alanine + UDP + H(+). It functions in the pathway cell wall biogenesis; peptidoglycan biosynthesis. Functionally, cell wall formation. Catalyzes the transfer of a GlcNAc subunit on undecaprenyl-pyrophosphoryl-MurNAc-pentapeptide (lipid intermediate I) to form undecaprenyl-pyrophosphoryl-MurNAc-(pentapeptide)GlcNAc (lipid intermediate II). The protein is UDP-N-acetylglucosamine--N-acetylmuramyl-(pentapeptide) pyrophosphoryl-undecaprenol N-acetylglucosamine transferase of Bordetella petrii (strain ATCC BAA-461 / DSM 12804 / CCUG 43448).